The following is a 98-amino-acid chain: Small ribosomal subunit protein bS21B (98 aa).

The segment at 61 to 98 is disordered; that stretch reads KLQREGLLPMKPKPVFGAGAGGERGGRGGPGAGPRGPR. Over residues 78–98 the composition is skewed to gly residues; the sequence is AGAGGERGGRGGPGAGPRGPR.

Belongs to the bacterial ribosomal protein bS21 family.

This Bradyrhizobium diazoefficiens (strain JCM 10833 / BCRC 13528 / IAM 13628 / NBRC 14792 / USDA 110) protein is Small ribosomal subunit protein bS21B.